We begin with the raw amino-acid sequence, 130 residues long: Small ribosomal subunit protein uS8 (130 aa).

The protein belongs to the universal ribosomal protein uS8 family. As to quaternary structure, part of the 30S ribosomal subunit.

Functionally, one of the primary rRNA binding proteins, it binds directly to 16S rRNA central domain where it helps coordinate assembly of the platform of the 30S subunit. This is Small ribosomal subunit protein uS8 from Methanococcus maripaludis (strain C6 / ATCC BAA-1332).